We begin with the raw amino-acid sequence, 422 residues long: Large ribosomal subunit protein uL4 (422 aa).

A2 carries the post-translational modification N-acetylalanine. An N6-acetyllysine modification is found at K14. R97 carries the post-translational modification Omega-N-methylarginine. N6-acetyllysine is present on K106. Residue K239 forms a Glycyl lysine isopeptide (Lys-Gly) (interchain with G-Cter in SUMO2) linkage. N6-acetyllysine is present on K259. Position 266 is a phosphothreonine (T266). Phosphoserine is present on residues S290 and S295. Residue R300 is modified to Citrulline. K327 is covalently cross-linked (Glycyl lysine isopeptide (Lys-Gly) (interchain with G-Cter in SUMO2)). Residues K333 and K353 each carry the N6-acetyllysine modification. Residues 359–422 (EAKSDQKGVQ…PTSEEKKAAA (64 aa)) form a disordered region. Position 361 is an N6-acetyllysine; alternate (K361). A Glycyl lysine isopeptide (Lys-Gly) (interchain with G-Cter in SUMO1); alternate cross-link involves residue K361. S362 is modified (phosphoserine). Basic and acidic residues-rich tracts occupy residues 376–385 (NKEKKAVGDK) and 402–422 (PAAE…KAAA).

The protein belongs to the universal ribosomal protein uL4 family. Component of the large ribosomal subunit. May bind IPO9 with low affinity. Interacts with RBM3. In terms of processing, citrullinated by PADI4.

It localises to the cytoplasm. Its function is as follows. Component of the large ribosomal subunit. The ribosome is a large ribonucleoprotein complex responsible for the synthesis of proteins in the cell. This Bos taurus (Bovine) protein is Large ribosomal subunit protein uL4 (RPL4).